Consider the following 455-residue polypeptide: Venom prothrombin activator nigrarin-D (455 aa).

A signal peptide spans methionine 1–alanine 20. Residues glutamate 21–arginine 40 constitute a propeptide that is removed on maturation. Residues serine 41–aspartate 86 enclose the Gla domain. Glutamate 46, glutamate 47, glutamate 54, glutamate 56, glutamate 59, glutamate 60, glutamate 65, glutamate 66, glutamate 69, glutamate 72, and glutamate 75 each carry 4-carboxyglutamate. A disulfide bridge links cysteine 57 with cysteine 62. Residues aspartate 86–glutamate 122 form the EGF-like 1; calcium-binding domain. 11 cysteine pairs are disulfide-bonded: cysteine 90–cysteine 101, cysteine 95–cysteine 110, cysteine 112–cysteine 121, cysteine 129–cysteine 140, cysteine 136–cysteine 149, cysteine 151–cysteine 164, cysteine 172–cysteine 328, cysteine 216–cysteine 221, cysteine 236–cysteine 252, cysteine 376–cysteine 390, and cysteine 401–cysteine 429. O-linked (Hex...) serine glycosylation is present at serine 92. An EGF-like 2 domain is found at cysteine 129–cysteine 164. Positions arginine 182–arginine 209 are cleaved as a propeptide — activation peptide. The Peptidase S1 domain maps to isoleucine 210 to serine 453. The active-site Charge relay system is the histidine 251. An N-linked (GlcNAc...) asparagine glycan is attached at asparagine 254. Aspartate 308 (charge relay system) is an active-site residue. Serine 405 serves as the catalytic Charge relay system.

This sequence belongs to the peptidase S1 family. Snake venom subfamily. Heterodimer of a light chain and a heavy chain; disulfide-linked. In terms of processing, the vitamin K-dependent, enzymatic carboxylation of some glutamate residues allows the modified protein to bind calcium. Expressed by the venom gland.

The protein localises to the secreted. It carries out the reaction Selective cleavage of Arg-|-Thr and then Arg-|-Ile bonds in prothrombin to form thrombin.. Functionally, snake prothrombin activator that attacks the hemostatic system of prey. This protein is functionally similar to blood coagulation factor Xa. This chain is Venom prothrombin activator nigrarin-D, found in Cryptophis nigrescens (Eastern small-eyed snake).